A 219-amino-acid polypeptide reads, in one-letter code: N-(5'-phosphoribosyl)anthranilate isomerase (219 aa).

It belongs to the TrpF family.

It carries out the reaction N-(5-phospho-beta-D-ribosyl)anthranilate = 1-(2-carboxyphenylamino)-1-deoxy-D-ribulose 5-phosphate. The protein operates within amino-acid biosynthesis; L-tryptophan biosynthesis; L-tryptophan from chorismate: step 3/5. The chain is N-(5'-phosphoribosyl)anthranilate isomerase from Chloroherpeton thalassium (strain ATCC 35110 / GB-78).